The primary structure comprises 90 residues: Probable Fe(2+)-trafficking protein (90 aa).

It belongs to the Fe(2+)-trafficking protein family.

Functionally, could be a mediator in iron transactions between iron acquisition and iron-requiring processes, such as synthesis and/or repair of Fe-S clusters in biosynthetic enzymes. The polypeptide is Probable Fe(2+)-trafficking protein (Aeromonas salmonicida (strain A449)).